The sequence spans 116 residues: Iron-sulfur cluster insertion protein ErpA (116 aa).

Iron-sulfur cluster-binding residues include cysteine 44, cysteine 108, and cysteine 110.

It belongs to the HesB/IscA family. Homodimer. It depends on iron-sulfur cluster as a cofactor.

Functionally, required for insertion of 4Fe-4S clusters for at least IspG. This Pseudomonas syringae pv. syringae (strain B728a) protein is Iron-sulfur cluster insertion protein ErpA.